Here is a 275-residue protein sequence, read N- to C-terminus: Peptidoglycan-N-acetylglucosamine deacetylase BC_1960 (275 aa).

In terms of domain architecture, NodB homology spans 81–262 (AEVALTFDDG…QLKTKGARFV (182 aa)). D88 acts as the Proton acceptor in catalysis. Zn(2+) is bound by residues D89, H139, and H143. At P179 the chain carries 2-hydroxyproline; partial. The active-site Proton donor is H233.

This sequence belongs to the polysaccharide deacetylase family. Zn(2+) is required as a cofactor. In terms of processing, hydroxylated on Pro-179. Hydroxylation alters the active site and enhances significantly deacetylase activity, probably by creating a more favorable environment for transition-state stabilization. It might be autocatalytic.

The enzyme catalyses peptidoglycan-N-acetyl-D-glucosamine + H2O = peptidoglycan-D-glucosamine + acetate.. Deacetylase activity is stimulated by hydroxylation on Pro-179. Inhibited by CuCl(2) and ZnCl(2). Inhibited by the hydroxamate N-hydroxy-4-(naphthalene-1-yl)benzamide (NHNB). Functionally, catalyzes the deacetylation of N-acetylglucosamine (GlcNAc) residues in peptidoglycan. Also acts on soluble chitin substrates and N-acetylchitooligomers. Acts on cell wall peptidoglycan from the Gram-positive bacteria B.cereus and B.subtilis and the Gram-negative bacterium H.pylori. Not active on acetylated xylan. This chain is Peptidoglycan-N-acetylglucosamine deacetylase BC_1960, found in Bacillus cereus (strain ATCC 14579 / DSM 31 / CCUG 7414 / JCM 2152 / NBRC 15305 / NCIMB 9373 / NCTC 2599 / NRRL B-3711).